The chain runs to 594 residues: Putative aldehyde oxidase Art an 7 (594 aa).

The signal sequence occupies residues 1-23 (MASSIKTVILFLLPLLLAYSVLA). Positions 28–56 (TDGGDKPGPEIDDGGGDKPVPGNNDGASD) are disordered.

In terms of processing, the N-terminus is blocked. Glycosylated. As to expression, expressed in pollen (at protein level).

It localises to the cytoplasm. It carries out the reaction an aldehyde + O2 + H2O = a carboxylate + H2O2 + H(+). Functionally, catalyzes the oxidation of aldehydes to the corresponding carboxylate by coupling the reaction to the reduction of dioxygen to hydrogen peroxide. Substrates include glyoxal and other aldehydes. Does not have enzymatic activity on D-galactose. This is Putative aldehyde oxidase Art an 7 from Artemisia annua (Sweet wormwood).